A 421-amino-acid chain; its full sequence is Ankyrin repeat and SOCS box protein 6 (421 aa).

ANK repeat units follow at residues 67 to 97, 102 to 131, 136 to 166, 170 to 205, 226 to 255, and 260 to 289; these read EGVS…NLNF, TYYT…DINR, HESS…DVNA, HGKT…DVKA, GGDK…DPSE, and ESLT…AYNC. Residues 360–415 enclose the SOCS box domain; sequence ALHFSLRQLESYPPPLKHLCRVAIRLYLQPWPVDVKVKALPLPDRLKWYLLSEHSG.

It belongs to the ankyrin SOCS box (ASB) family. Binds APS. Identified in a complex with ELOB and ELOC. Interacts with CUL5 and RNF7. Interacts with SQSTM1.

The protein localises to the cytoplasm. The protein operates within protein modification; protein ubiquitination. Its function is as follows. Probable substrate-recognition component of a SCF-like ECS (Elongin-Cullin-SOCS-box protein) E3 ubiquitin-protein ligase complex which mediates the ubiquitination and subsequent proteasomal degradation of target proteins. May play a role in the regulation of cell proliferation and autophagy by promoting the ubiquitination and degradation of SQSTM1. The polypeptide is Ankyrin repeat and SOCS box protein 6 (ASB6) (Pongo abelii (Sumatran orangutan)).